The sequence spans 538 residues: CWF19-like protein 1 (538 aa).

Disordered regions lie at residues 259–278 (PDVT…TGKQ) and 298–324 (QGRK…PPQP).

The protein belongs to the CWF19 family.

This Pongo abelii (Sumatran orangutan) protein is CWF19-like protein 1 (CWF19L1).